A 349-amino-acid polypeptide reads, in one-letter code: Protein RecA (349 aa).

ATP is bound at residue 65 to 72; the sequence is GPESSGKT.

The protein belongs to the RecA family.

The protein resides in the cytoplasm. Functionally, can catalyze the hydrolysis of ATP in the presence of single-stranded DNA, the ATP-dependent uptake of single-stranded DNA by duplex DNA, and the ATP-dependent hybridization of homologous single-stranded DNAs. It interacts with LexA causing its activation and leading to its autocatalytic cleavage. The chain is Protein RecA from Acinetobacter baumannii (strain AB307-0294).